Reading from the N-terminus, the 291-residue chain is ATP synthase gamma chain (291 aa).

It belongs to the ATPase gamma chain family. As to quaternary structure, F-type ATPases have 2 components, CF(1) - the catalytic core - and CF(0) - the membrane proton channel. CF(1) has five subunits: alpha(3), beta(3), gamma(1), delta(1), epsilon(1). CF(0) has three main subunits: a, b and c.

It localises to the cell inner membrane. In terms of biological role, produces ATP from ADP in the presence of a proton gradient across the membrane. The gamma chain is believed to be important in regulating ATPase activity and the flow of protons through the CF(0) complex. The sequence is that of ATP synthase gamma chain from Ralstonia nicotianae (strain ATCC BAA-1114 / GMI1000) (Ralstonia solanacearum).